The chain runs to 245 residues: 14-3-3 protein zeta/delta (245 aa).

M1 is modified (N-acetylmethionine). Residue K3 is modified to N6-acetyllysine. At S58 the chain carries Phosphoserine; by PKA. K68 bears the N6-acetyllysine mark. Phosphoserine is present on residues S184, S207, and S210. T232 is subject to Phosphothreonine; by CK1.

Belongs to the 14-3-3 family. In terms of assembly, homodimer. Heterodimerizes with YWHAE. Homo- and heterodimerization is inhibited by phosphorylation on Ser-58. Interacts with FOXO4, NOXA1, SSH1 ARHGEF2, CDK16 and BSPRY. Interacts with WEE1 (C-terminal). Interacts with MLF1 (phosphorylated form); the interaction retains it in the cytoplasm. Interacts with BAX; the interaction occurs in the cytoplasm. Under stress conditions, MAPK8-mediated phosphorylation releases BAX to mitochondria. Interacts with TP53; the interaction enhances p53 transcriptional activity. The Ser-58 phosphorylated form inhibits this interaction and p53 transcriptional activity. Interacts with ABL1 (phosphorylated form); the interaction retains ABL1 in the cytoplasm. Interacts with PKA-phosphorylated AANAT; the interaction modulates AANAT enzymatic activity by increasing affinity for arylalkylamines and acetyl-CoA and protecting the enzyme from dephosphorylation and proteasomal degradation. It may also prevent thiol-dependent inactivation. Interacts with AKT1; the interaction phosphorylates YWHAZ and modulates dimerization. Interacts with GAB2. Interacts with BCL2L11, SAMSN1 and TLK2. Interacts with phosphorylated RAF1; the interaction is inhibited when YWHAZ is phosphorylated on Thr-232. Interacts with Thr-phosphorylated ITGB2. Interacts with the 'Thr-369' phosphorylated form of DAPK2. Interacts with PI4KB, TBC1D22A and TBC1D22B. Interacts with ZFP36L1 (via phosphorylated form); this interaction occurs in a p38 MAPK- and AKT-signaling pathways. Interacts with SLITRK1. Interacts with AK5, LDB1, MADD, MARK3, PDE1A and SMARCB1. Interacts with YWHAZ. Interacts with MEFV. Interacts with ADAM22 (via C-terminus). The delta, brain-specific form differs from the zeta form in being phosphorylated. Phosphorylation on Ser-184 by MAPK8; promotes dissociation of BAX and translocation of BAX to mitochondria. Phosphorylation on Thr-232; inhibits binding of RAF1. Phosphorylated on Ser-58 by PKA and protein kinase C delta type catalytic subunit in a sphingosine-dependent fashion. Phosphorylation on Ser-58 by PKA; disrupts homodimerization and heterodimerization with YHAE and TP53.

The protein localises to the cytoplasm. It localises to the melanosome. Its function is as follows. Adapter protein implicated in the regulation of a large spectrum of both general and specialized signaling pathways. Binds to a large number of partners, usually by recognition of a phosphoserine or phosphothreonine motif. Binding generally results in the modulation of the activity of the binding partner. Promotes cytosolic retention and inactivation of TFEB transcription factor by binding to phosphorylated TFEB. Induces ARHGEF7 activity on RAC1 as well as lamellipodia and membrane ruffle formation. In neurons, regulates spine maturation through the modulation of ARHGEF7 activity. The sequence is that of 14-3-3 protein zeta/delta (YWHAZ) from Bos taurus (Bovine).